A 402-amino-acid chain; its full sequence is D-galactonate dehydratase family member EGBG_02030 (402 aa).

Aspartate 207 is a binding site for Mg(2+). Histidine 209 is a D-arabinonate binding site. Mg(2+) is bound by residues glutamate 233 and glutamate 259. Residues glutamate 259, arginine 280, histidine 309, and glutamate 336 each contribute to the D-arabinonate site.

This sequence belongs to the mandelate racemase/muconate lactonizing enzyme family. GalD subfamily.

In terms of biological role, has no detectable activity with D-mannonate and with a panel of 70 other acid sugars (in vitro), in spite of the conservation of the residues that are expected to be important for catalytic activity and cofactor binding. May have evolved a divergent function. The chain is D-galactonate dehydratase family member EGBG_02030 from Enterococcus gallinarum (strain EG2).